The chain runs to 484 residues: Zinc metalloproteinase homolog-disintegrin albolatin (484 aa).

The N-terminal stretch at M1–S20 is a signal peptide. The propeptide occupies I21–L191. N-linked (GlcNAc...) asparagine glycans are attached at residues N80, N251, and N301. Residues R194 to P392 enclose the Peptidase M12B domain. Disulfide bonds link C305–C387, C345–C369, C347–C352, C403–C422, C414–C432, C416–C427, C426–C449, C440–C446, C445–C470, and C458–C477. Residues P400–G484 enclose the Disintegrin domain. Positions K462–D464 match the Cell attachment site; atypical (KGD) motif.

It belongs to the venom metalloproteinase (M12B) family. P-II subfamily. P-IIb sub-subfamily. Homodimer; disulfide-linked (disintegrin). As to expression, expressed by the venom gland.

It is found in the secreted. Functionally, the function of this complete protein has not been studied, but it may be similar to the function of the disintegrin domain. A recombinant protein of this domain (409-484) inhibits collagen-induced human platelet aggregation, without having effect on ADP-induced aggregation. It may act either by blocking the binding of fibrinogen to the platelet receptor GPIIb/GPIIIa (ITGA2B/ITGB3) or by blocking the binding of collagen to the integrin alpha-2/beta-1 complex (ITGA2/ITGB1). In Trimeresurus albolabris (White-lipped pit viper), this protein is Zinc metalloproteinase homolog-disintegrin albolatin.